The sequence spans 2476 residues: Non-reducing polyketide synthase ausA (2476 aa).

Residues 14–253 (VLFGPKYPEV…HHSNHTQAVE (240 aa)) are N-terminal acylcarrier protein transacylase domain (SAT). In terms of domain architecture, Ketosynthase family 3 (KS3) spans 379-795 (AVPIAVTGMA…GSNAAIVLRE (417 aa)). Catalysis depends on for beta-ketoacyl synthase activity residues Cys-544, His-679, and His-718. A malonyl-CoA:ACP transacylase (MAT) domain region spans residues 906-1210 (ICFGGQTGDT…LPTDLSGAQA (305 aa)). The active-site For acyl/malonyl transferase activity is Ser-993. Positions 1277–1405 (QEASLVRLLR…GRVSLQAAGS (129 aa)) are N-terminal hotdog fold. In terms of domain architecture, PKS/mFAS DH spans 1277–1584 (QEASLVRLLR…FTGVSIQSLK (308 aa)). The interval 1280–1583 (SLVRLLRQDG…TFTGVSIQSL (304 aa)) is product template (PT) domain. His-1310 serves as the catalytic Proton acceptor; for dehydratase activity. The segment at 1433 to 1584 (SSSGLKRSTV…FTGVSIQSLK (152 aa)) is C-terminal hotdog fold. Residue Asp-1491 is the Proton donor; for dehydratase activity of the active site. Residues 1626-1700 (DGDLLAVQTM…GLVQRIFPGH (75 aa)) enclose the Carrier domain. Residue Ser-1660 is modified to O-(pantetheine 4'-phosphoryl)serine. Positions 1862-2095 (QHASEHKLLH…GFNWVDWTDN (234 aa)) are methyltransferase (CMeT) domain. The tract at residues 2128 to 2476 (NTVQEQTVLY…YEFLRRHVGL (349 aa)) is thioesterase (TE) domain. Residues Ser-2251, Asp-2413, and His-2445 each act as for thioesterase activity in the active site.

The enzyme catalyses 3 malonyl-CoA + acetyl-CoA + 2 S-adenosyl-L-methionine = 3,5-dimethylorsellinate + 2 S-adenosyl-L-homocysteine + 3 CO2 + 4 CoA. It functions in the pathway secondary metabolite biosynthesis; terpenoid biosynthesis. Functionally, non-reducing polyketide synthase; part of the gene cluster A that mediates the biosynthesis of austinol and dehydroaustinol, two fungal meroterpenoids. The first step of the pathway is the synthesis of 3,5-dimethylorsellinic acid by the polyketide synthase ausA. 3,5-dimethylorsellinic acid is then prenylated by the polyprenyl transferase ausN. Further epoxidation by the FAD-dependent monooxygenase ausM and cyclization by the probable terpene cyclase ausL lead to the formation of protoaustinoid A. Protoaustinoid A is then oxidized to spiro-lactone preaustinoid A3 by the combined action of the FAD-binding monooxygenases ausB and ausC, and the dioxygenase ausE. Acid-catalyzed keto-rearrangement and ring contraction of the tetraketide portion of preaustinoid A3 by ausJ lead to the formation of preaustinoid A4. The aldo-keto reductase ausK, with the help of ausH, is involved in the next step by transforming preaustinoid A4 into isoaustinone which is in turn hydroxylated by the P450 monooxygenase ausI to form austinolide. Finally, the cytochrome P450 monooxygenase ausG modifies austinolide to austinol. Austinol can be further modified to dehydroaustinol which forms a diffusible complex with diorcinol that initiates conidiation. Due to genetic rearrangements of the clusters and the subsequent loss of some enzymes, the end products of the Emericella nidulans austinoid biosynthesis clusters are austinol and dehydroaustinol, even if additional enzymes, such as the O-acetyltransferase ausQ and the cytochrome P450 monooxygenase ausR are still functional. This is Non-reducing polyketide synthase ausA from Emericella nidulans (strain FGSC A4 / ATCC 38163 / CBS 112.46 / NRRL 194 / M139) (Aspergillus nidulans).